Reading from the N-terminus, the 167-residue chain is Small ribosomal subunit protein uS5 (167 aa).

The S5 DRBM domain occupies 12-75 (LQEKLVAVNR…EKARRNIVSV (64 aa)).

The protein belongs to the universal ribosomal protein uS5 family. As to quaternary structure, part of the 30S ribosomal subunit. Contacts proteins S4 and S8.

In terms of biological role, with S4 and S12 plays an important role in translational accuracy. Its function is as follows. Located at the back of the 30S subunit body where it stabilizes the conformation of the head with respect to the body. The polypeptide is Small ribosomal subunit protein uS5 (Shewanella loihica (strain ATCC BAA-1088 / PV-4)).